We begin with the raw amino-acid sequence, 109 residues long: Envelope small membrane protein (109 aa).

At 1 to 11 (MTNLLNKSLEE) the chain is on the virion surface side. Residues 12-32 (NGSFLTAVYIFVGFVALYLLG) form a helical membrane-spanning segment. Topologically, residues 33–109 (RALQAFVQAA…QDVQRNKLYS (77 aa)) are intravirion. The tract at residues 89–109 (NGWNNKNPANFQDVQRNKLYS) is disordered. Polar residues predominate over residues 90–109 (GWNNKNPANFQDVQRNKLYS).

The protein belongs to the gammacoronaviruses E protein family. In terms of assembly, homooligomer. Interacts with the M membrane protein in the budding compartment of the host cell, which is located between endoplasmic reticulum and the Golgi complex. The cytoplasmic tails of both proteins are important for this function. Interacts with Nucleoprotein.

The protein localises to the host Golgi apparatus membrane. In terms of biological role, plays a central role in virus morphogenesis and assembly. Acts as a viroporin and self-assembles in host membranes forming pentameric protein-lipid pores that allow ion transport. Also plays a role in the induction of apoptosis. In Avian infectious bronchitis virus (strain KB8523) (IBV), this protein is Envelope small membrane protein.